Here is a 101-residue protein sequence, read N- to C-terminus: Ascorbate-specific PTS system EIIB component (101 aa).

One can recognise a PTS EIIB type-2 domain in the interval 1–100 (MTVRILAVCG…VIKEHFPQDV (100 aa)). Residue Cys-9 is the Phosphocysteine intermediate of the active site. Phosphocysteine is present on Cys-9.

Its subcellular location is the cytoplasm. It catalyses the reaction N(pros)-phospho-L-histidyl-[protein] + L-ascorbate(out) = L-ascorbate 6-phosphate(in) + L-histidyl-[protein]. Functionally, the phosphoenolpyruvate-dependent sugar phosphotransferase system (sugar PTS), a major carbohydrate active transport system, catalyzes the phosphorylation of incoming sugar substrates concomitantly with their translocation across the cell membrane. The enzyme II UlaABC PTS system is involved in ascorbate transport. The polypeptide is Ascorbate-specific PTS system EIIB component (ulaB) (Escherichia coli O157:H7).